A 122-amino-acid polypeptide reads, in one-letter code: Selenoprotein H (122 aa).

Lys20 bears the N6-acetyllysine mark. A cross-link (cysteinyl-selenocysteine (Cys-Sec); redox-active) is located at residues 41–44; the sequence is CTSU. Position 44 (Sec44) is a non-standard amino acid, selenocysteine.

Belongs to the SelWTH family.

Functionally, may be involved in a redox-related process. The sequence is that of Selenoprotein H from Macaca fascicularis (Crab-eating macaque).